The primary structure comprises 379 residues: 1-deoxy-D-xylulose 5-phosphate reductoisomerase (379 aa).

Positions 10, 11, 12, 13, 38, 39, and 121 each coordinate NADPH. Residue Lys-122 coordinates 1-deoxy-D-xylulose 5-phosphate. Glu-123 is a binding site for NADPH. Residue Asp-147 coordinates Mn(2+). Residues Ser-148, Glu-149, Ser-173, and His-196 each contribute to the 1-deoxy-D-xylulose 5-phosphate site. A Mn(2+)-binding site is contributed by Glu-149. Position 202 (Gly-202) interacts with NADPH. Residues Ser-209, Asn-214, Lys-215, and Glu-218 each coordinate 1-deoxy-D-xylulose 5-phosphate. Glu-218 lines the Mn(2+) pocket.

Belongs to the DXR family. Mg(2+) serves as cofactor. Mn(2+) is required as a cofactor.

It carries out the reaction 2-C-methyl-D-erythritol 4-phosphate + NADP(+) = 1-deoxy-D-xylulose 5-phosphate + NADPH + H(+). The protein operates within isoprenoid biosynthesis; isopentenyl diphosphate biosynthesis via DXP pathway; isopentenyl diphosphate from 1-deoxy-D-xylulose 5-phosphate: step 1/6. Functionally, catalyzes the NADPH-dependent rearrangement and reduction of 1-deoxy-D-xylulose-5-phosphate (DXP) to 2-C-methyl-D-erythritol 4-phosphate (MEP). This is 1-deoxy-D-xylulose 5-phosphate reductoisomerase from Chlamydia muridarum (strain MoPn / Nigg).